The sequence spans 256 residues: uncharacterized protein (256 aa).

Belongs to the glycosyltransferase 2 family.

This is an uncharacterized protein from Acanthamoeba polyphaga mimivirus (APMV).